The following is a 256-amino-acid chain: Aspirochlorine biosynthesis protein F (256 aa).

N-linked (GlcNAc...) asparagine glycosylation is present at asparagine 19. 3 consecutive transmembrane segments (helical) span residues 21-41, 163-183, and 214-234; these read SITP…GPHF, LVWV…FFFT, and FGLG…ILAV.

The protein resides in the membrane. It functions in the pathway mycotoxin biosynthesis. Functionally, part of the gene cluster that mediates the biosynthesis of aspirochlorine (or antibiotic A30641), an unusual halogenated spiro compound with distinctive antifungal properties due to selective inhibition of protein biosynthesis, and which is also active against bacteria, viruses, and murine tumor cells. The non-ribosomal peptide synthetase (NRPS) aclP is responsible the formation of the diketopiperazine (DKP) core from the condensation of 2 phenylalanine residues. One Phe residue is tailored into chlorotyrosine by hydroxylation and chlorination, whereas the second Phe undergoes an unprecedented C-C bond cleavage to be converted into glycine. After formation of the DKP, sulfur is incorporated into the DKP by conjugation with glutathione by aclG, followed by its stepwise degradation to the thiol by aclI, aclJ and aclK, and the dithiol oxidation by aclT. In addition, oxygenases (aclB, aclC, aclL and aclO) and O-methyltransferases (aclM and aclU) act as tailoring enzymes to produce the intermediate dechloroaspirochlorine. Ultimately, chlorination of dechloroaspirochlorine by the halogenase aclH is the last step in the aspirochlorine pathway. This chain is Aspirochlorine biosynthesis protein F, found in Aspergillus oryzae (strain ATCC 42149 / RIB 40) (Yellow koji mold).